Consider the following 443-residue polypeptide: Phosphoglucosamine mutase (443 aa).

The active-site Phosphoserine intermediate is the Ser-100. Residues Ser-100, Asp-239, Asp-241, and Asp-243 each contribute to the Mg(2+) site. Ser-100 is subject to Phosphoserine.

Belongs to the phosphohexose mutase family. It depends on Mg(2+) as a cofactor. Activated by phosphorylation.

It catalyses the reaction alpha-D-glucosamine 1-phosphate = D-glucosamine 6-phosphate. Functionally, catalyzes the conversion of glucosamine-6-phosphate to glucosamine-1-phosphate. The chain is Phosphoglucosamine mutase from Shewanella sediminis (strain HAW-EB3).